A 638-amino-acid polypeptide reads, in one-letter code: Poly(A)-specific ribonuclease PARN (638 aa).

Residues aspartate 28 and glutamate 30 each coordinate a divalent metal cation. Residues 143 to 165 form a disordered region; it reads REQYDEKRSQSNGAGALSYTSPN. Positions 152–165 are enriched in polar residues; that stretch reads QSNGAGALSYTSPN. A phosphoserine mark is found at serine 163 and serine 167. The R3H domain maps to 178–245; the sequence is KKFIDQVVEK…ERYIVISKVD (68 aa). Lysine 220 bears the N6-acetyllysine mark. A divalent metal cation-binding residues include aspartate 292 and aspartate 382. Lysine 499 carries the post-translational modification N6-acetyllysine. Position 530 is a phosphoserine (serine 530). Serine 557 carries the phosphoserine; by MAPKAPK2 modification. Residues 573-638 are disordered; sequence RAEAGLEARA…AKLFEVPDTW (66 aa). Phosphoserine occurs at positions 583 and 587. Positions 606 to 615 are enriched in basic residues; the sequence is KKAKKLKRMK. Phosphoserine is present on residues serine 619, serine 623, and serine 627.

The protein belongs to the CAF1 family. In terms of assembly, homodimer. Found in a mRNA decay complex with RENT1, RENT2 and RENT3B. Interacts with KHSRP. Interacts with CELF1/CUGBP1. Interacts with ZC3HAV1 in an RNA-independent manner. Interacts with DHX36. The cofactor is Mg(2+). Post-translationally, phosphorylation by MAPKAPK2, preventing GADD45A mRNA degradation after genotoxic stress.

It is found in the nucleus. The protein localises to the cytoplasm. The protein resides in the nucleolus. The catalysed reaction is Exonucleolytic cleavage of poly(A) to 5'-AMP.. Its function is as follows. 3'-exoribonuclease that has a preference for poly(A) tails of mRNAs, thereby efficiently degrading poly(A) tails. Exonucleolytic degradation of the poly(A) tail is often the first step in the decay of eukaryotic mRNAs and is also used to silence certain maternal mRNAs translationally during oocyte maturation and early embryonic development. Involved in nonsense-mediated mRNA decay, a critical process of selective degradation of mRNAs that contain premature stop codons. Also involved in degradation of inherently unstable mRNAs that contain AU-rich elements (AREs) in their 3'-UTR, possibly via its interaction with KHSRP. Probably mediates the removal of poly(A) tails of AREs mRNAs, which constitutes the first step of destabilization. Interacts with both the 3'-end poly(A) tail and the 5'-end cap structure during degradation, the interaction with the cap structure being required for an efficient degradation of poly(A) tails. Also able to recognize poly(A) tails of microRNAs such as MIR21 and H/ACA box snoRNAs (small nucleolar RNAs) leading to microRNAs degradation or snoRNA increased stability. The polypeptide is Poly(A)-specific ribonuclease PARN (PARN) (Bos taurus (Bovine)).